The chain runs to 299 residues: Nucleotide-binding protein DIP1313 (299 aa).

Residue 22–29 (GLSGAGLS) participates in ATP binding. GTP is bound at residue 73–76 (DVRS).

The protein belongs to the RapZ-like family.

Functionally, displays ATPase and GTPase activities. This Corynebacterium diphtheriae (strain ATCC 700971 / NCTC 13129 / Biotype gravis) protein is Nucleotide-binding protein DIP1313.